Consider the following 101-residue polypeptide: B3 domain-containing protein At1g08985 (101 aa).

Residues 7 to 101 (IVKTLSETDC…WQNTKFIFSM (95 aa)) constitute a DNA-binding region (TF-B3).

The protein localises to the nucleus. This Arabidopsis thaliana (Mouse-ear cress) protein is B3 domain-containing protein At1g08985.